A 159-amino-acid polypeptide reads, in one-letter code: Na(+)/H(+) antiporter subunit E1 (159 aa).

Transmembrane regions (helical) follow at residues 1–21, 27–47, 49–69, and 101–121; these read MAIQIILNFILAFIWIFLSGS, LLLGFILGLGFVYLFSRILPG, FYFIKIYKILKLAVVFFVELL, and WQIVLLSNLITLTPGTVVLGI.

This sequence belongs to the CPA3 antiporters (TC 2.A.63) subunit E family. May form a heterooligomeric complex that consists of seven subunits: mnhA1, mnhB1, mnhC1, mnhD1, mnhE1, mnhF1 and mnhG1.

Its subcellular location is the cell membrane. Its function is as follows. Mnh complex is a Na(+)/H(+) antiporter involved in Na(+) excretion. This is Na(+)/H(+) antiporter subunit E1 (mnhE1) from Staphylococcus haemolyticus (strain JCSC1435).